A 475-amino-acid polypeptide reads, in one-letter code: MGSVMSLSCSKRKATSQDVECSSESRKRRKISSENDEEECCRLIPSLPDELSIQILARLPRICYSSVRLVSRRWRSAVSTSEVYSLRKELGRTEEWLYVLTKGHEDKLLWYALDPVSTKWQRLPPMPVVVYEEESRKSLSGLWNMITPSFNVGAIVRSFLGRRDSSEQMPFCGCAIGAVDGGLYVIGGLSRSKTVSCVWRFDPILNSWSEVSSMLASRAYSKTGVLNKKLYVVGGVDRGRGGLSPLQSAEVYDPSTDAWSEVPSMPFSKAQVLPNAFLADLLKPIATGMTCYNGRLCVPQSLYSWPFFVDVGGEVYDPETNLWVEMPSGMGEGWPARQAGTKLSVVVDGELYAFDPSSSMENGKIKVYDQKEDTWKVVIGEVPVYDLTDSESPYLLAGFHGKLHFITRDPNHNVTVLRADVPNIPVSSSSSSSSSVSIPHLKTNAPNKSDTVTWKLIATKDFGAAELVSCQVIDI.

A disordered region spans residues 1 to 28 (MGSVMSLSCSKRKATSQDVECSSESRKR). In terms of domain architecture, F-box spans 41–87 (CRLIPSLPDELSIQILARLPRICYSSVRLVSRRWRSAVSTSEVYSLR). Kelch repeat units follow at residues 94–140 (EEWL…KSLS), 182–228 (GLYV…VLNK), 229–279 (KLYV…AFLA), 306–350 (PFFV…VDGE), and 352–401 (YAFD…GFHG).

The sequence is that of F-box/kelch-repeat protein At1g22040 from Arabidopsis thaliana (Mouse-ear cress).